The primary structure comprises 160 residues: Ubiquitin-conjugating enzyme E2 16 (160 aa).

One can recognise a UBC core domain in the interval 3 to 153 (SSIKRLHKEY…VRCTTYLYAK (151 aa)). Cys90 (glycyl thioester intermediate) is an active-site residue.

This sequence belongs to the ubiquitin-conjugating enzyme family.

The enzyme catalyses S-ubiquitinyl-[E1 ubiquitin-activating enzyme]-L-cysteine + [E2 ubiquitin-conjugating enzyme]-L-cysteine = [E1 ubiquitin-activating enzyme]-L-cysteine + S-ubiquitinyl-[E2 ubiquitin-conjugating enzyme]-L-cysteine.. It functions in the pathway protein modification; protein ubiquitination. Catalyzes the covalent attachment of ubiquitin to other proteins. The sequence is that of Ubiquitin-conjugating enzyme E2 16 (ubc16) from Schizosaccharomyces pombe (strain 972 / ATCC 24843) (Fission yeast).